The sequence spans 289 residues: Coiled-coil domain-containing protein 137 (289 aa).

Disordered regions lie at residues 1 to 64, 149 to 184, and 204 to 225; these read MAGA…QEIP, EVQA…EKAA, and QPPE…GRRS. Positions 7–20 are enriched in low complexity; it reads GAAVSRVQAGPGSP. A Phosphoserine modification is found at serine 19. A coiled-coil region spans residues 155-197; the sequence is KEKSEQKKAKKAFQKRRLDKVRRKKEEKAADRLEQELLRDTVK. The span at 162–177 shows a compositional bias: basic residues; sequence KAKKAFQKRRLDKVRR. Serine 233 carries the post-translational modification Phosphoserine. Residues 247-273 are a coiled coil; the sequence is RQRIVEEERERAVQAYRALKQRQQQLH. The interval 265–289 is disordered; that stretch reads LKQRQQQLHGERPHLTSRKKPEPQL. The span at 273 to 289 shows a compositional bias: basic and acidic residues; the sequence is HGERPHLTSRKKPEPQL.

It is found in the chromosome. The protein is Coiled-coil domain-containing protein 137 (CCDC137) of Homo sapiens (Human).